The sequence spans 130 residues: Ribosome-binding factor A (130 aa).

This sequence belongs to the RbfA family. Monomer. Binds 30S ribosomal subunits, but not 50S ribosomal subunits or 70S ribosomes.

Its subcellular location is the cytoplasm. One of several proteins that assist in the late maturation steps of the functional core of the 30S ribosomal subunit. Associates with free 30S ribosomal subunits (but not with 30S subunits that are part of 70S ribosomes or polysomes). Required for efficient processing of 16S rRNA. May interact with the 5'-terminal helix region of 16S rRNA. This is Ribosome-binding factor A from Prochlorococcus marinus (strain AS9601).